The sequence spans 130 residues: RutC family protein slr0709 (130 aa).

Belongs to the RutC family.

The sequence is that of RutC family protein slr0709 from Synechocystis sp. (strain ATCC 27184 / PCC 6803 / Kazusa).